The chain runs to 368 residues: MSVQIPVALPQNAYEIAIANGGLAAAGTWLQQADLKAGTKLLIVTNPAIGRRYGDRLVAALQEAGFIVDCLTLPAGERYKTPATVQRIYDKALELRLERRSALVALGGGVIGDMTGFAAATWLRGISFVQIPTSLLAMVDASIGGKTGVNHPRGKNLIGAFHQPKLVLIDPETLQTLPVREFRAGMAEVIKYGVIWDRDLFERLEASPFLDRPRSLPANLLTLILERSCRAKAEVVAKDEKESGLRAILNYGHTIGHAVESLTGYRIVNHGEAVAIGMVAAGRLAVALGLWNQDECDRQEAVIAKAGLPTRLPEGIDQAAIVEALQLDKKVQAGKVRFILPTTLGHVTITDQVPSQTLQEVLQAIANP.

NAD(+) is bound by residues 109-113, 133-134, K146, K155, and 173-176; these read GVIGD, TS, and TLQT. The Zn(2+) site is built by E188, H253, and H270.

The protein belongs to the sugar phosphate cyclases superfamily. Dehydroquinate synthase family. The cofactor is Co(2+). Zn(2+) is required as a cofactor. Requires NAD(+) as cofactor.

The protein localises to the cytoplasm. The catalysed reaction is 7-phospho-2-dehydro-3-deoxy-D-arabino-heptonate = 3-dehydroquinate + phosphate. It functions in the pathway metabolic intermediate biosynthesis; chorismate biosynthesis; chorismate from D-erythrose 4-phosphate and phosphoenolpyruvate: step 2/7. Its function is as follows. Catalyzes the conversion of 3-deoxy-D-arabino-heptulosonate 7-phosphate (DAHP) to dehydroquinate (DHQ). The polypeptide is 3-dehydroquinate synthase (Synechococcus sp. (strain ATCC 27144 / PCC 6301 / SAUG 1402/1) (Anacystis nidulans)).